Consider the following 187-residue polypeptide: Interferon alpha-1/2 (187 aa).

Residues 1–23 (MALPCSFSVALVLLSCHSLCCLA) form the signal peptide. Cystine bridges form between C24–C122 and C52–C160. Residue N101 is glycosylated (N-linked (GlcNAc...) asparagine).

This sequence belongs to the alpha/beta interferon family.

The protein localises to the secreted. Produced by macrophages, IFN-alpha have antiviral activities. Interferon stimulates the production of two enzymes: a protein kinase and an oligoadenylate synthetase. The protein is Interferon alpha-1/2 of Canis lupus familiaris (Dog).